A 296-amino-acid polypeptide reads, in one-letter code: Cytidine deaminase (296 aa).

CMP/dCMP-type deaminase domains follow at residues Asp48 to Val168 and Gln187 to Glu296. Asn89–Glu91 contributes to the substrate binding site. Zn(2+) is bound at residue His102. The Proton donor role is filled by Glu104. Zn(2+)-binding residues include Cys129 and Cys132.

It belongs to the cytidine and deoxycytidylate deaminase family. Homodimer. It depends on Zn(2+) as a cofactor.

The catalysed reaction is cytidine + H2O + H(+) = uridine + NH4(+). The enzyme catalyses 2'-deoxycytidine + H2O + H(+) = 2'-deoxyuridine + NH4(+). Functionally, this enzyme scavenges exogenous and endogenous cytidine and 2'-deoxycytidine for UMP synthesis. The chain is Cytidine deaminase from Pectobacterium carotovorum subsp. carotovorum (strain PC1).